The sequence spans 217 residues: Methylthioribulose-1-phosphate dehydratase (217 aa).

Positions 106 and 108 each coordinate Zn(2+).

It belongs to the aldolase class II family. MtnB subfamily. Zn(2+) serves as cofactor.

It catalyses the reaction 5-(methylsulfanyl)-D-ribulose 1-phosphate = 5-methylsulfanyl-2,3-dioxopentyl phosphate + H2O. It participates in amino-acid biosynthesis; L-methionine biosynthesis via salvage pathway; L-methionine from S-methyl-5-thio-alpha-D-ribose 1-phosphate: step 2/6. Functionally, catalyzes the dehydration of methylthioribulose-1-phosphate (MTRu-1-P) into 2,3-diketo-5-methylthiopentyl-1-phosphate (DK-MTP-1-P). The protein is Methylthioribulose-1-phosphate dehydratase of Xanthomonas campestris pv. campestris (strain 8004).